The chain runs to 192 residues: Fe/S biogenesis protein NfuA (192 aa).

Positions 149 and 152 each coordinate [4Fe-4S] cluster.

This sequence belongs to the NfuA family. Homodimer. The cofactor is [4Fe-4S] cluster.

Involved in iron-sulfur cluster biogenesis. Binds a 4Fe-4S cluster, can transfer this cluster to apoproteins, and thereby intervenes in the maturation of Fe/S proteins. Could also act as a scaffold/chaperone for damaged Fe/S proteins. This is Fe/S biogenesis protein NfuA from Shewanella piezotolerans (strain WP3 / JCM 13877).